We begin with the raw amino-acid sequence, 633 residues long: tRNA uridine 5-carboxymethylaminomethyl modification enzyme MnmG (633 aa).

Residues 15-20 (GAGHAG), I127, and S182 contribute to the FAD site. Position 276 to 290 (276 to 290 (GPRYCPSIEDKIVRF)) interacts with NAD(+). Q373 serves as a coordination point for FAD.

It belongs to the MnmG family. As to quaternary structure, homodimer. Heterotetramer of two MnmE and two MnmG subunits. The cofactor is FAD.

It localises to the cytoplasm. In terms of biological role, NAD-binding protein involved in the addition of a carboxymethylaminomethyl (cmnm) group at the wobble position (U34) of certain tRNAs, forming tRNA-cmnm(5)s(2)U34. The sequence is that of tRNA uridine 5-carboxymethylaminomethyl modification enzyme MnmG from Streptococcus agalactiae serotype Ia (strain ATCC 27591 / A909 / CDC SS700).